The sequence spans 76 residues: Rhesus theta defensin-1/2 subunit B (76 aa).

A signal peptide spans 1 to 22; sequence MRTFALLTAMLLLVALHAQAEA. Positions 23-64 are excised as a propeptide; it reads RQARADEAAAQQQPGADDQGMAHSFTRPENAALPLSESARGL. Positions 25–54 are disordered; the sequence is ARADEAAAQQQPGADDQGMAHSFTRPENAA. The segment covering 30–44 has biased composition (low complexity); that stretch reads AAAQQQPGADDQGMA. Residue Arg65 forms a Cyclopeptide (Arg-Cys) (interchain with C-73 in subunit A); in form RTD-1 linkage. Residue Arg65 forms a Cyclopeptide (Arg-Cys) (interchain with C-73 in subunit B); in form RTD-2 linkage. Cys68 and Cys73 are oxidised to a cystine. Cys73 is covalently cross-linked (Cyclopeptide (Cys-Arg) (interchain with R-65 in subunit A); in form RTD-1). Cys73 is covalently cross-linked (Cyclopeptide (Cys-Arg) (interchain with R-65 in subunit B); in form RTD-2). A propeptide spanning residues 74–76 is cleaved from the precursor; that stretch reads QLL.

This sequence belongs to the alpha-defensin family. Theta subfamily. In terms of assembly, RTD-1 is a cyclic heterodimer composed of subunits A and B; disulfide-linked. RTD-2 is a cyclic homodimer composed of two subunits B; disulfide-linked. In terms of processing, forms a cyclic peptide with 1 subunit B (RTD-2) or with 1 subunit A (RTD-1). An additional intersubunit disulfide bond is formed. RTD-1 is expressed in bone marrow. Detected in promyelocytes, myelocytes and mature neutrophils and monocytes.

RTD-1 and RTD-2 have similar antimicrobial activities against the Gram-positive bacteria S.aureus 502A and L.monocytogenes, the Gram-negative bacterium S.typhimurium, and the fungi C.albicans 16820 and C.neoformans 271A. RTD-2 is 2-3-fold less active than RTD-1 against E.coli ML35. The sequence is that of Rhesus theta defensin-1/2 subunit B (RTD1B) from Macaca mulatta (Rhesus macaque).